We begin with the raw amino-acid sequence, 1519 residues long: Dicer-like protein 1 (1519 aa).

Polar residues predominate over residues 1 to 13 (MTHQNTETASLAT). The disordered stretch occupies residues 1 to 62 (MTHQNTETAS…KDPSQRQRQQ (62 aa)). The segment covering 39–48 (SDESEGSEEE) has biased composition (acidic residues). Positions 116-297 (LFERAKVQNT…EAARNLEALL (182 aa)) constitute a Helicase ATP-binding domain. Position 129–136 (129–136 (LDTGSGKT)) interacts with ATP. The DEAH box signature appears at 242-245 (DEAH). Residues 431–601 (ALSSKVRVLW…QLLPEDRILH (171 aa)) enclose the Helicase C-terminal domain. The Dicer dsRNA-binding fold domain maps to 634-724 (AITVLARYAS…NSVYHRRLPA (91 aa)). The PAZ domain maps to 882–1001 (DDIEYQADMP…ICIEPLKISA (120 aa)). 2 RNase III domains span residues 1026–1184 (GLEA…LTPG) and 1235–1387 (CRRV…VDSN). Positions 1275, 1373, and 1376 each coordinate Mg(2+). A DRBM domain is found at 1421 to 1489 (TFLHNKLTNE…SENALTELLH (69 aa)). The Zn(2+) site is built by cysteine 1433, histidine 1460, cysteine 1501, and cysteine 1503.

The protein belongs to the helicase family. Dicer subfamily. Mg(2+) serves as cofactor. The cofactor is Mn(2+).

In terms of biological role, dicer-like endonuclease involved in cleaving double-stranded RNA in the RNA interference (RNAi) pathway. Produces 21 to 25 bp dsRNAs (siRNAs) which target the selective destruction of homologous RNAs leading to sequence-specific suppression of gene expression, called post-transcriptional gene silencing (PTGS). Part of a broad host defense response against viral infection and transposons. This is Dicer-like protein 1 (dcl1) from Aspergillus terreus (strain NIH 2624 / FGSC A1156).